We begin with the raw amino-acid sequence, 317 residues long: Acetyl-coenzyme A carboxylase carboxyl transferase subunit beta (317 aa).

The interval 1–28 (MANNMTDTMTKFDTNNDSASLQQNGNKA) is disordered. In terms of domain architecture, CoA carboxyltransferase N-terminal spans 55–317 (PSTKCSSCHS…LCSVPNVDAQ (263 aa)). 4 residues coordinate Zn(2+): cysteine 59, cysteine 62, cysteine 78, and cysteine 81. A C4-type zinc finger spans residues 59 to 81 (CSSCHSVITNTALIFNCYVCPHC).

Belongs to the AccD/PCCB family. As to quaternary structure, acetyl-CoA carboxylase is a heterohexamer composed of biotin carboxyl carrier protein (AccB), biotin carboxylase (AccC) and two subunits each of ACCase subunit alpha (AccA) and ACCase subunit beta (AccD). It depends on Zn(2+) as a cofactor.

The protein resides in the cytoplasm. The enzyme catalyses N(6)-carboxybiotinyl-L-lysyl-[protein] + acetyl-CoA = N(6)-biotinyl-L-lysyl-[protein] + malonyl-CoA. It functions in the pathway lipid metabolism; malonyl-CoA biosynthesis; malonyl-CoA from acetyl-CoA: step 1/1. In terms of biological role, component of the acetyl coenzyme A carboxylase (ACC) complex. Biotin carboxylase (BC) catalyzes the carboxylation of biotin on its carrier protein (BCCP) and then the CO(2) group is transferred by the transcarboxylase to acetyl-CoA to form malonyl-CoA. This is Acetyl-coenzyme A carboxylase carboxyl transferase subunit beta from Psychrobacter arcticus (strain DSM 17307 / VKM B-2377 / 273-4).